We begin with the raw amino-acid sequence, 305 residues long: tRNA dimethylallyltransferase (305 aa).

Gly8–Thr15 is a binding site for ATP. Thr10–Thr15 contacts substrate. The tract at residues Asp33–Gln36 is interaction with substrate tRNA.

Belongs to the IPP transferase family. As to quaternary structure, monomer. Mg(2+) serves as cofactor.

It carries out the reaction adenosine(37) in tRNA + dimethylallyl diphosphate = N(6)-dimethylallyladenosine(37) in tRNA + diphosphate. Its function is as follows. Catalyzes the transfer of a dimethylallyl group onto the adenine at position 37 in tRNAs that read codons beginning with uridine, leading to the formation of N6-(dimethylallyl)adenosine (i(6)A). The sequence is that of tRNA dimethylallyltransferase from Thermotoga sp. (strain RQ2).